The sequence spans 357 residues: Sulfate/thiosulfate import ATP-binding protein CysA (357 aa).

The ABC transporter domain occupies 3–237 (IQIQGVSKQY…PASPFVYDFL (235 aa)). 35–42 (GPSGSGKT) provides a ligand contact to ATP.

Belongs to the ABC transporter superfamily. Sulfate/tungstate importer (TC 3.A.1.6) family. In terms of assembly, the complex is composed of two ATP-binding proteins (CysA), two transmembrane proteins (CysT and CysW) and a solute-binding protein (CysP).

It localises to the cell membrane. It carries out the reaction sulfate(out) + ATP + H2O = sulfate(in) + ADP + phosphate + H(+). The enzyme catalyses thiosulfate(out) + ATP + H2O = thiosulfate(in) + ADP + phosphate + H(+). Its function is as follows. Part of the ABC transporter complex CysAWTP involved in sulfate/thiosulfate import. Responsible for energy coupling to the transport system. The sequence is that of Sulfate/thiosulfate import ATP-binding protein CysA from Bacillus cereus (strain ATCC 14579 / DSM 31 / CCUG 7414 / JCM 2152 / NBRC 15305 / NCIMB 9373 / NCTC 2599 / NRRL B-3711).